A 391-amino-acid chain; its full sequence is Protein NirF (391 aa).

The protein localises to the cytoplasm. In terms of biological role, required for the biosynthesis of heme d1 of nitrite reductase. Could have a dehydrogenase activity yielding sirohydrochlorin from precorrin-2 or dehydrogenation of propionate side chain C17. The polypeptide is Protein NirF (nirF) (Stutzerimonas stutzeri (Pseudomonas stutzeri)).